Reading from the N-terminus, the 68-residue chain is Large ribosomal subunit protein uL29 (68 aa).

Belongs to the universal ribosomal protein uL29 family.

This is Large ribosomal subunit protein uL29 from Bradyrhizobium diazoefficiens (strain JCM 10833 / BCRC 13528 / IAM 13628 / NBRC 14792 / USDA 110).